Consider the following 820-residue polypeptide: DNA gyrase subunit A (820 aa).

Residues 31 to 496 (IPDVRDGLKP…TLTNIEIEDL (466 aa)) enclose the Topo IIA-type catalytic domain. Tyr119 serves as the catalytic O-(5'-phospho-DNA)-tyrosine intermediate. The short motif at 523-529 (QRRGGKG) is the GyrA-box element.

The protein belongs to the type II topoisomerase GyrA/ParC subunit family. In terms of assembly, heterotetramer, composed of two GyrA and two GyrB chains. In the heterotetramer, GyrA contains the active site tyrosine that forms a transient covalent intermediate with DNA, while GyrB binds cofactors and catalyzes ATP hydrolysis.

Its subcellular location is the cytoplasm. It carries out the reaction ATP-dependent breakage, passage and rejoining of double-stranded DNA.. A type II topoisomerase that negatively supercoils closed circular double-stranded (ds) DNA in an ATP-dependent manner to modulate DNA topology and maintain chromosomes in an underwound state. Negative supercoiling favors strand separation, and DNA replication, transcription, recombination and repair, all of which involve strand separation. Also able to catalyze the interconversion of other topological isomers of dsDNA rings, including catenanes and knotted rings. Type II topoisomerases break and join 2 DNA strands simultaneously in an ATP-dependent manner. This chain is DNA gyrase subunit A, found in Lawsonia intracellularis (strain PHE/MN1-00).